The chain runs to 428 residues: MAIIEQVGAREILDSRGNPTVEVEVALEDGTLTRAAVPSGASTGEHEAVELRDGDAERYGGKGVEKAVEAVLDEIGPELAGVDAIEQRVVDQKLVDLDGTPDKSRLGANAILGVSLAVAKAAAESVGLELFRYVGGPNAHVLPVPMMNILNGGAHADTGVDVQEFMIAPIGADSFSEAVRWGAETYHSLKSVLKAKGLATGLGDEGGFAPDLPSNREALDLIASAIEKAGYKLGRDIVLALDVAATEFYRDGAYHFEGSKRSAEQMAGYYGELLDAYPLVSIEDPLSEDDWDGWVRLTSEIGERVQLVGDDLFVTNPERLEEGISRRAGNALLVKVNQIGTLSETLDAVHLATSCGYKSMMSHRSGETEDTTIADLAVATGCGQIKTGAPARSERVAKYNQLLRIEETLGDAARYAGELAFPRFTPEA.

(2R)-2-phosphoglycerate is bound at residue Gln-163. Glu-205 (proton donor) is an active-site residue. Mg(2+) is bound by residues Asp-242, Glu-283, and Asp-310. Residues Lys-335, Arg-364, Ser-365, and Lys-386 each coordinate (2R)-2-phosphoglycerate. The active-site Proton acceptor is Lys-335.

It belongs to the enolase family. The cofactor is Mg(2+).

It localises to the cytoplasm. The protein localises to the secreted. Its subcellular location is the cell surface. The enzyme catalyses (2R)-2-phosphoglycerate = phosphoenolpyruvate + H2O. The protein operates within carbohydrate degradation; glycolysis; pyruvate from D-glyceraldehyde 3-phosphate: step 4/5. Functionally, catalyzes the reversible conversion of 2-phosphoglycerate (2-PG) into phosphoenolpyruvate (PEP). It is essential for the degradation of carbohydrates via glycolysis. The protein is Enolase of Saccharopolyspora erythraea (strain ATCC 11635 / DSM 40517 / JCM 4748 / NBRC 13426 / NCIMB 8594 / NRRL 2338).